The sequence spans 84 residues: Small ribosomal subunit protein uS17 (84 aa).

It belongs to the universal ribosomal protein uS17 family. Part of the 30S ribosomal subunit.

Its function is as follows. One of the primary rRNA binding proteins, it binds specifically to the 5'-end of 16S ribosomal RNA. The sequence is that of Small ribosomal subunit protein uS17 from Borrelia recurrentis (strain A1).